The chain runs to 309 residues: NAD kinase (309 aa).

Catalysis depends on D89, which acts as the Proton acceptor. NAD(+) is bound by residues 89–90 (DG), 163–164 (NE), H174, R191, D193, and 204–209 (TAYALS).

Belongs to the NAD kinase family. Requires a divalent metal cation as cofactor.

Its subcellular location is the cytoplasm. It carries out the reaction NAD(+) + ATP = ADP + NADP(+) + H(+). Involved in the regulation of the intracellular balance of NAD and NADP, and is a key enzyme in the biosynthesis of NADP. Catalyzes specifically the phosphorylation on 2'-hydroxyl of the adenosine moiety of NAD to yield NADP. The sequence is that of NAD kinase from Shewanella baltica (strain OS155 / ATCC BAA-1091).